The following is a 367-amino-acid chain: Outer membrane protein assembly factor BamC (367 aa).

An N-terminal signal peptide occupies residues 1–16; the sequence is MRLLPLFLMVTLAASG. The N-palmitoyl cysteine moiety is linked to residue Cys17. Cys17 carries S-diacylglycerol cysteine lipidation.

The protein belongs to the BamC family. In terms of assembly, part of the Bam complex.

It localises to the cell outer membrane. Functionally, part of the outer membrane protein assembly complex, which is involved in assembly and insertion of beta-barrel proteins into the outer membrane. This Thiobacillus denitrificans (strain ATCC 25259 / T1) protein is Outer membrane protein assembly factor BamC.